A 321-amino-acid polypeptide reads, in one-letter code: Solute carrier family 25 member 33 (321 aa).

3 Solcar repeats span residues 9-118 (ENTL…AKEQ), 126-213 (NSNI…LKKY), and 231-315 (TSFF…IVYL). Transmembrane regions (helical) follow at residues 12–32 (LLHL…TCPL), 49–65 (VYYP…AGMV), 121–141 (GIFV…AAFI), 190–210 (LTAS…YESL), 233–253 (FFGL…IAYP), and 298–318 (QIPN…LLED).

Belongs to the mitochondrial carrier (TC 2.A.29) family. Expressed in the central nervous system. Also expressed in testis and skeletal muscle. Weakly expressed in heart, liver, kidney, prostate, colon and peripheral blood leukocytes.

The protein resides in the mitochondrion inner membrane. It carries out the reaction UTP(in) + UDP(out) = UTP(out) + UDP(in). It catalyses the reaction dUTP(out) + UTP(in) = dUTP(in) + UTP(out). The enzyme catalyses 5-methyl-UTP(out) + UTP(in) = 5-methyl-UTP(in) + UTP(out). The catalysed reaction is 5-methyl-UDP(out) + UTP(in) = 5-methyl-UDP(in) + UTP(out). It carries out the reaction UTP(in) + CTP(out) = UTP(out) + CTP(in). It catalyses the reaction CDP(out) + UTP(in) = CDP(in) + UTP(out). The enzyme catalyses dCTP(out) + UTP(in) = dCTP(in) + UTP(out). The catalysed reaction is dCDP(out) + UTP(in) = dCDP(in) + UTP(out). It carries out the reaction UTP(in) + GTP(out) = UTP(out) + GTP(in). It catalyses the reaction UTP(in) + GDP(out) = UTP(out) + GDP(in). The enzyme catalyses dGTP(out) + UTP(in) = dGTP(in) + UTP(out). The catalysed reaction is dGDP(out) + UTP(in) = dGDP(in) + UTP(out). It carries out the reaction ITP(out) + UTP(in) = ITP(in) + UTP(out). With respect to regulation, inhibited by pyridoxal 5'-phosphate, 4,7-diphenyl-1,10-phenanthroline, tannic acid, and mercurials (mercury dichloride, mersalyl acid, p-hydroxymercuribenzoate). Its function is as follows. Mitochondrial transporter that imports/exports pyrimidine nucleotides into and from mitochondria. Selectively transports uridine, thymidine, guanosine, cytosine and inosine (deoxy)nucleoside di- and triphosphates by an antiport mechanism. May import (deoxy)nucleoside triphosphates in exchange for intramitochondrial (deoxy)nucleoside diphosphates, thus providing precursors necessary for de novo synthesis of mitochondrial DNA and RNA while exporting products of their catabolism. Participates in mitochondrial genome maintenance, regulation of mitochondrial membrane potential and mitochondrial respiration. Upon INS or IGF1 stimulation regulates cell growth and proliferation by controlling mitochondrial DNA replication and transcription, the ratio of mitochondria-to nuclear-encoded components of the electron transport chain resulting in control of mitochondrial ROS production. Participates in dendritic cell endocytosis and may associate with mitochondrial oxidative phosphorylation. In Homo sapiens (Human), this protein is Solute carrier family 25 member 33 (SLC25A33).